Here is a 45-residue protein sequence, read N- to C-terminus: Pseudo-hevein (45 aa).

One can recognise a Chitin-binding type-1 domain in the interval 1–43; the sequence is EQCGRQAGGKLCPNNLCCSQYGWCGSSDDYCSPSKNCQSNCKG. Cystine bridges form between cysteine 3-cysteine 18, cysteine 12-cysteine 24, cysteine 17-cysteine 31, and cysteine 37-cysteine 41.

N-acetyl-D-glucosamine / N-acetyl-D-neuraminic acid binding lectin. Can inhibit fungal growth. In Hevea brasiliensis (Para rubber tree), this protein is Pseudo-hevein.